Consider the following 323-residue polypeptide: Glyoxylate/hydroxypyruvate reductase HPR3 (323 aa).

Residues 160 to 163, 182 to 184, and 238 to 240 each bind NADP(+); these read LGSI, SRS, and VGR. Catalysis depends on residues Arg240 and Glu269. His287 functions as the Proton donor in the catalytic mechanism. 287-289 provides a ligand contact to NADP(+); it reads HFA.

It belongs to the D-isomer specific 2-hydroxyacid dehydrogenase family. GyaR subfamily. Homodimer.

The catalysed reaction is glycolate + NADP(+) = glyoxylate + NADPH + H(+). The enzyme catalyses (R)-glycerate + NADP(+) = 3-hydroxypyruvate + NADPH + H(+). With respect to regulation, inhibited by oxalate. Catalyzes the NADPH-dependent reduction of glyoxylate and hydroxypyruvate (HP) into glycolate and glycerate. Mostly active in the presence of NADPH and glyoxylate. The chain is Glyoxylate/hydroxypyruvate reductase HPR3 (HPR3) from Arabidopsis thaliana (Mouse-ear cress).